A 244-amino-acid polypeptide reads, in one-letter code: Transcriptional activator protein anr (244 aa).

Ala21 to Asp149 is an a nucleoside 3',5'-cyclic phosphate binding site. The region spanning Lys159 to Ile232 is the HTH crp-type domain. Residues Arg192–Thr211 constitute a DNA-binding region (H-T-H motif).

Transcriptional activator of anaerobic gene expression. This chain is Transcriptional activator protein anr (anr), found in Pseudomonas aeruginosa (strain ATCC 15692 / DSM 22644 / CIP 104116 / JCM 14847 / LMG 12228 / 1C / PRS 101 / PAO1).